A 35-amino-acid polypeptide reads, in one-letter code: Thaumatin-like protein 6 (35 aa).

Belongs to the thaumatin family.

This is Thaumatin-like protein 6 from Glebionis coronaria (Crown daisy).